A 254-amino-acid chain; its full sequence is Nickel import ATP-binding protein NikO (254 aa).

An ABC transporter domain is found at Phe5–Leu246. Gly37–Ser44 is an ATP binding site.

The protein belongs to the ABC transporter superfamily. Forms an energy-coupling factor (ECF) transporter complex composed of an ATP-binding protein (A component, NikO), a transmembrane protein (T component, NikQ) and a fused possible substrate-capture protein (S component, NikMN) of unknown stoichimetry.

The protein localises to the cell inner membrane. The enzyme catalyses Ni(2+)(out) + ATP + H2O = Ni(2+)(in) + ADP + phosphate + H(+). Functionally, part of the energy-coupling factor (ECF) transporter complex NikMNQO involved in nickel import. The complex confers nickel uptake upon expression in E.coli. Shows very low activity with cobalt. Presumably responsible for energy coupling to the transport system. This is Nickel import ATP-binding protein NikO from Rhodobacter capsulatus (strain ATCC BAA-309 / NBRC 16581 / SB1003).